The chain runs to 367 residues: Glutamate 5-kinase (367 aa).

Position 10 (lysine 10) interacts with ATP. 3 residues coordinate substrate: serine 50, aspartate 137, and asparagine 149. ATP-binding positions include threonine 169–aspartate 170 and threonine 211–lysine 217. Residues alanine 275–glutamate 353 form the PUA domain.

It belongs to the glutamate 5-kinase family.

Its subcellular location is the cytoplasm. The catalysed reaction is L-glutamate + ATP = L-glutamyl 5-phosphate + ADP. The protein operates within amino-acid biosynthesis; L-proline biosynthesis; L-glutamate 5-semialdehyde from L-glutamate: step 1/2. Its function is as follows. Catalyzes the transfer of a phosphate group to glutamate to form L-glutamate 5-phosphate. The sequence is that of Glutamate 5-kinase from Klebsiella pneumoniae subsp. pneumoniae (strain ATCC 700721 / MGH 78578).